A 146-amino-acid polypeptide reads, in one-letter code: Aspartate carbamoyltransferase regulatory chain (146 aa).

Cys102, Cys107, Cys131, and Cys134 together coordinate Zn(2+).

This sequence belongs to the PyrI family. As to quaternary structure, contains catalytic and regulatory chains. Zn(2+) is required as a cofactor.

Involved in allosteric regulation of aspartate carbamoyltransferase. The protein is Aspartate carbamoyltransferase regulatory chain of Clostridium acetobutylicum (strain ATCC 824 / DSM 792 / JCM 1419 / IAM 19013 / LMG 5710 / NBRC 13948 / NRRL B-527 / VKM B-1787 / 2291 / W).